A 194-amino-acid chain; its full sequence is Protein DROOPING LEAF (194 aa).

The segment at 15–42 adopts a C4-type zinc-finger fold; that stretch reads CTYCNTVLAVGVPCKRLMDTVTVKCGHC. The interval 83 to 103 is disordered; it reads LVSPTSNEGSPRAPFVVKPPE.

It belongs to the YABBY family.

It is found in the nucleus. Its function is as follows. Regulates carpel specification in flower development. Severe or intermediate mutation in DL causes complete or partial homeotic conversion of carpels into stamens without affecting the identities of other floral organs. Interacts antagonistically with class B genes and controls floral meristem determinacy. Regulates midrib formation in leaves probably by inducing cell proliferation in the central region of the leaf. This is Protein DROOPING LEAF (DL) from Oryza sativa subsp. japonica (Rice).